Consider the following 332-residue polypeptide: L-lactate dehydrogenase C chain (332 aa).

Serine 2 carries the blocked amino end (Ser) modification. Residues 29–57 and arginine 99 each bind NAD(+); that span reads GNVG…DENK. Substrate contacts are provided by arginine 106, asparagine 138, and arginine 169. Asparagine 138 is a binding site for NAD(+). The active-site Proton acceptor is the histidine 193. Residue threonine 248 participates in substrate binding.

This sequence belongs to the LDH/MDH superfamily. LDH family. As to quaternary structure, homotetramer. Interacts with RABL2/RABL2A; binds preferentially to GTP-bound RABL2.

The protein localises to the cytoplasm. It catalyses the reaction (S)-lactate + NAD(+) = pyruvate + NADH + H(+). The protein operates within fermentation; pyruvate fermentation to lactate; (S)-lactate from pyruvate: step 1/1. Functionally, possible role in sperm motility. The protein is L-lactate dehydrogenase C chain (Ldhc) of Rattus norvegicus (Rat).